The chain runs to 281 residues: MIENRRGLTIFSHTMLILGIAVILFPLYVAFVAATLDDRAVFETPMTLLPGTQLLENIKTIWVNGVGVNSAPFWLMMLNSFIMAFSITVGKITVSMLSAFAIVWFRFPLRNLFFWMIFITLMLPVEVRIFPTVEVIANLKMLDSYAGLTLPLMASATATFLFRQFFMTLPDELVEAARIDGASPMRFFRDIVLPLSKTNLAALFVITFIYGWNQYLWPLLIITDVNLGTAVAGIKGMIATGEGTTQWNQVMAAMLLTLIPPVVIVLAMQRAFVRGLVDSEK.

The next 6 helical transmembrane spans lie at 16–36 (LILG…AATL), 85–105 (FSIT…IVWF), 113–133 (FFWM…FPTV), 142–162 (LDSY…TFLF), 202–222 (ALFV…LLII), and 247–267 (WNQV…IVLA). The region spanning 77–268 (MLNSFIMAFS…IPPVVIVLAM (192 aa)) is the ABC transmembrane type-1 domain.

Belongs to the binding-protein-dependent transport system permease family. UgpAE subfamily. The complex is composed of two ATP-binding proteins (UgpC), two transmembrane proteins (UgpA and UgpE) and a solute-binding protein (UgpB).

The protein localises to the cell inner membrane. Its function is as follows. Part of the ABC transporter complex UgpBAEC involved in sn-glycerol-3-phosphate (G3P) import. Probably responsible for the translocation of the substrate across the membrane. The sequence is that of sn-glycerol-3-phosphate transport system permease protein UgpE (ugpE) from Salmonella choleraesuis (strain SC-B67).